The chain runs to 494 residues: MKPLVCSFIVILLILLPTTISHDYSDALTKSILFFEGQRSGYLPREQRMTWRHNSALNDGKNLNVDLVGGYYDAGDNIKFHFPMAFTTTMLAWSAIDFGSYMSPADLRDNLVALRWGSNYLLKTVSQLPNRIFVQVGEPTPDHQCWERPEDMDTPRTAYALEAPKPASDLAGEIAAALAAASIAFKRFDPRYSKLLLDNALRTFEYADSHRGSYTNNPETKLAVCPFYCSVNGYEDELLWGAAWLRRATGKDSYIKYLVENRQSFGSDSNYFEFGWDNKVGGVNVLVAKEVFEKNVAAIAPYKDTAEKLMCSFFLETPGAHMSYSPGGLLYKPGSSQLQNTVALSFLLLTYANYLSKSSQQPLQILSTTPLWYLTQRIANIVGFEKVDYILGDNPMKMSYMIGYGNRYPRQIHHRGASSPSITTHPTPVKCSEGWNSFSSPNPDPNVLVGAVIGGPNIDDKFVGGRTNASETEPTTYINAPFVGLLAYFKANPV.

An N-terminal signal peptide occupies residues 1–21; sequence MKPLVCSFIVILLILLPTTIS. The active-site Nucleophile is the Asp76. His413 is an active-site residue. Asn468 carries an N-linked (GlcNAc...) asparagine glycan. Glu473 is an active-site residue.

Belongs to the glycosyl hydrolase 9 (cellulase E) family.

It is found in the secreted. It catalyses the reaction Endohydrolysis of (1-&gt;4)-beta-D-glucosidic linkages in cellulose, lichenin and cereal beta-D-glucans.. The polypeptide is Endoglucanase 22 (GH9B16) (Arabidopsis thaliana (Mouse-ear cress)).